A 340-amino-acid polypeptide reads, in one-letter code: Beta-1,3-N-acetylglucosaminyltransferase radical fringe (340 aa).

Residues methionine 1–threonine 4 are Cytoplasmic-facing. A helical; Signal-anchor for type II membrane protein membrane pass occupies residues tyrosine 5–leucine 25. The Lumenal segment spans residues asparagine 26 to arginine 340. N-linked (GlcNAc...) asparagine glycosylation occurs at asparagine 42. Arginine 110 is a substrate binding site. An N-linked (GlcNAc...) asparagine glycan is attached at asparagine 149. 2 disulfides stabilise this stretch: cysteine 150-cysteine 161 and cysteine 179-cysteine 242. Aspartate 183 serves as a coordination point for substrate. Aspartate 184 contacts Mn(2+). Aspartate 272 is an active-site residue. A Mn(2+)-binding site is contributed by histidine 296.

The protein belongs to the glycosyltransferase 31 family. Requires Mn(2+) as cofactor.

It localises to the golgi apparatus membrane. It catalyses the reaction 3-O-(alpha-L-fucosyl)-L-threonyl-[EGF-like domain protein] + UDP-N-acetyl-alpha-D-glucosamine = 3-O-(N-acetyl-beta-D-glucosaminyl-(1-&gt;3)-alpha-L-fucosyl)-L-threonyl-[EGF-like domain protein] + UDP + H(+). It carries out the reaction 3-O-(alpha-L-fucosyl)-L-seryl-[EGF-like domain protein] + UDP-N-acetyl-alpha-D-glucosamine = 3-O-(N-acetyl-beta-D-glucosaminyl-(1-&gt;3)-alpha-L-fucosyl)-L-seryl-[EGF-like domain protein] + UDP + H(+). Functionally, glycosyltransferase that initiates the elongation of O-linked fucose residues attached to EGF-like repeats in the extracellular domain of Notch molecules. This Xenopus laevis (African clawed frog) protein is Beta-1,3-N-acetylglucosaminyltransferase radical fringe (rfng).